The following is a 444-amino-acid chain: Argininosuccinate synthase (444 aa).

Residues 18–26 (AFSGGLDTS) and alanine 44 contribute to the ATP site. Position 100 (tyrosine 100) interacts with L-citrulline. Positions 130 and 132 each coordinate ATP. Threonine 132, asparagine 136, and aspartate 137 together coordinate L-aspartate. Position 136 (asparagine 136) interacts with L-citrulline. Aspartate 137 is a binding site for ATP. Arginine 140 and serine 193 together coordinate L-citrulline. Aspartate 195 is an ATP binding site. Residues threonine 202, glutamate 204, and glutamate 281 each coordinate L-citrulline.

Belongs to the argininosuccinate synthase family. Type 2 subfamily. In terms of assembly, homotetramer.

The protein resides in the cytoplasm. It carries out the reaction L-citrulline + L-aspartate + ATP = 2-(N(omega)-L-arginino)succinate + AMP + diphosphate + H(+). It participates in amino-acid biosynthesis; L-arginine biosynthesis; L-arginine from L-ornithine and carbamoyl phosphate: step 2/3. The protein is Argininosuccinate synthase of Histophilus somni (strain 2336) (Haemophilus somnus).